We begin with the raw amino-acid sequence, 275 residues long: Polyamine aminopropyltransferase (275 aa).

The PABS domain maps to 2–235; it reads ELWFTEKQTK…GLWTFTIGSK (234 aa). Gln-31 contacts S-methyl-5'-thioadenosine. Positions 62 and 86 each coordinate spermidine. S-methyl-5'-thioadenosine contacts are provided by residues Glu-106 and 137-138; that span reads DG. Asp-155 functions as the Proton acceptor in the catalytic mechanism. 155–158 contributes to the spermidine binding site; sequence DSTE. Pro-162 contacts S-methyl-5'-thioadenosine.

The protein belongs to the spermidine/spermine synthase family. In terms of assembly, homodimer or homotetramer.

The protein localises to the cytoplasm. The catalysed reaction is S-adenosyl 3-(methylsulfanyl)propylamine + putrescine = S-methyl-5'-thioadenosine + spermidine + H(+). It functions in the pathway amine and polyamine biosynthesis; spermidine biosynthesis; spermidine from putrescine: step 1/1. Its function is as follows. Catalyzes the irreversible transfer of a propylamine group from the amino donor S-adenosylmethioninamine (decarboxy-AdoMet) to putrescine (1,4-diaminobutane) to yield spermidine. The sequence is that of Polyamine aminopropyltransferase from Bacillus mycoides (strain KBAB4) (Bacillus weihenstephanensis).